We begin with the raw amino-acid sequence, 351 residues long: Photosystem II D2 protein (351 aa).

Residues Thr-39–Thr-59 form a helical membrane-spanning segment. His-116 contributes to the chlorophyll a binding site. The helical transmembrane segment at Gly-123–Pro-139 threads the bilayer. Gln-128 and Asn-141 together coordinate pheophytin a. Residues Val-151–Ala-164 form a helical membrane-spanning segment. A chlorophyll a-binding site is contributed by His-196. A helical transmembrane segment spans residues Gly-206–Asp-226. A plastoquinone-binding residues include His-213 and Phe-260. His-213 contributes to the Fe cation binding site. His-267 contacts Fe cation. Residues Gly-277 to Arg-293 form a helical membrane-spanning segment.

This sequence belongs to the reaction center PufL/M/PsbA/D family. As to quaternary structure, PSII is composed of 1 copy each of membrane proteins PsbA, PsbB, PsbC, PsbD, PsbE, PsbF, PsbH, PsbI, PsbJ, PsbK, PsbL, PsbM, PsbT, PsbX, PsbY, PsbZ, Psb30/Ycf12, at least 3 peripheral proteins of the oxygen-evolving complex and a large number of cofactors. It forms dimeric complexes. Requires The D1/D2 heterodimer binds P680, chlorophylls that are the primary electron donor of PSII, and subsequent electron acceptors. It shares a non-heme iron and each subunit binds pheophytin, quinone, additional chlorophylls, carotenoids and lipids. There is also a Cl(-1) ion associated with D1 and D2, which is required for oxygen evolution. The PSII complex binds additional chlorophylls, carotenoids and specific lipids. as cofactor.

The protein localises to the plastid. It is found in the chloroplast thylakoid membrane. The catalysed reaction is 2 a plastoquinone + 4 hnu + 2 H2O = 2 a plastoquinol + O2. Its function is as follows. Photosystem II (PSII) is a light-driven water:plastoquinone oxidoreductase that uses light energy to abstract electrons from H(2)O, generating O(2) and a proton gradient subsequently used for ATP formation. It consists of a core antenna complex that captures photons, and an electron transfer chain that converts photonic excitation into a charge separation. The D1/D2 (PsbA/PsbD) reaction center heterodimer binds P680, the primary electron donor of PSII as well as several subsequent electron acceptors. D2 is needed for assembly of a stable PSII complex. The sequence is that of Photosystem II D2 protein from Phaeodactylum tricornutum (strain CCAP 1055/1).